A 255-amino-acid polypeptide reads, in one-letter code: dTDP-3-amino-3,6-dideoxy-alpha-D-glucopyranose N,N-dimethyltransferase (255 aa).

S-adenosyl-L-methionine contacts are provided by residues Tyr14, Tyr22, Tyr33, Ala58, 58–59 (AC), Glu79, 101–102 (DM), and Met117.

Belongs to the methyltransferase TylM1/DesVI family. Homodimer.

It carries out the reaction dTDP-3-amino-3,6-dideoxy-alpha-D-glucose + 2 S-adenosyl-L-methionine = dTDP-alpha-D-mycaminose + 2 S-adenosyl-L-homocysteine + 2 H(+). It functions in the pathway antibiotic biosynthesis; tylosin biosynthesis. S-adenosyl-L-methionine-dependent methyltransferase involved in the biosynthesis of mycaminose, an essential structural component of the macrolide antibiotic tylosin. Involved in the last step in mycaminose biosynthesis by mediating dimethylation of the hexose C-3' amino group. This chain is dTDP-3-amino-3,6-dideoxy-alpha-D-glucopyranose N,N-dimethyltransferase (tylM1), found in Streptomyces fradiae (Streptomyces roseoflavus).